A 229-amino-acid chain; its full sequence is Endonuclease V (229 aa).

D36 and D104 together coordinate Mg(2+).

This sequence belongs to the endonuclease V family. Requires Mg(2+) as cofactor.

It localises to the cytoplasm. The enzyme catalyses Endonucleolytic cleavage at apurinic or apyrimidinic sites to products with a 5'-phosphate.. In terms of biological role, DNA repair enzyme involved in the repair of deaminated bases. Selectively cleaves double-stranded DNA at the second phosphodiester bond 3' to a deoxyinosine leaving behind the intact lesion on the nicked DNA. In Pectobacterium carotovorum subsp. carotovorum (strain PC1), this protein is Endonuclease V.